The sequence spans 213 residues: Protein-L-isoaspartate O-methyltransferase (213 aa).

Serine 61 is a catalytic residue.

Belongs to the methyltransferase superfamily. L-isoaspartyl/D-aspartyl protein methyltransferase family.

Its subcellular location is the cytoplasm. The enzyme catalyses [protein]-L-isoaspartate + S-adenosyl-L-methionine = [protein]-L-isoaspartate alpha-methyl ester + S-adenosyl-L-homocysteine. Its function is as follows. Catalyzes the methyl esterification of L-isoaspartyl residues in peptides and proteins that result from spontaneous decomposition of normal L-aspartyl and L-asparaginyl residues. It plays a role in the repair and/or degradation of damaged proteins. In Petrotoga mobilis (strain DSM 10674 / SJ95), this protein is Protein-L-isoaspartate O-methyltransferase.